A 303-amino-acid polypeptide reads, in one-letter code: Glycine--tRNA ligase alpha subunit (303 aa).

This sequence belongs to the class-II aminoacyl-tRNA synthetase family. Tetramer of two alpha and two beta subunits.

The protein localises to the cytoplasm. It catalyses the reaction tRNA(Gly) + glycine + ATP = glycyl-tRNA(Gly) + AMP + diphosphate. This chain is Glycine--tRNA ligase alpha subunit, found in Klebsiella pneumoniae subsp. pneumoniae (strain ATCC 700721 / MGH 78578).